The chain runs to 471 residues: Putative multidrug resistance protein MdtD (471 aa).

The next 13 helical transmembrane spans lie at 12-32 (LWIV…VNTA), 49-69 (MVIV…GWMA), 72-92 (IGVR…SLFC), 101-123 (LVMS…RLTV), 138-158 (FVTL…GILV), 165-185 (WIFL…LWLM), 195-215 (FDIF…LALD), 220-240 (LGIS…SILW), 265-285 (IGLF…FMTP), 286-306 (VFLQ…MIPM), 342-362 (LVFM…VLFF), 393-413 (LLSM…GLLL), and 431-451 (VFLY…LIFA).

It belongs to the major facilitator superfamily. TCR/Tet family.

It localises to the cell inner membrane. In Enterobacter sp. (strain 638), this protein is Putative multidrug resistance protein MdtD.